A 381-amino-acid polypeptide reads, in one-letter code: MRLSKAPPADRFDAVPAASDRPGRGAVRAWLYLLAVLVVAMVAVGGATRLTGSGLSITEWRPVTGVVPPLNAADWAVEFDKYRDTPQYRILNQGIGLDGFKTLYWWEWGHRLLGRIVGLVFFLPFAWFWWRGWLGRRLLLGLLGLGLLGGLQGAIGWIMVASGLQPGMTAVAPLKLALHLTTASLILAGLVWLAAGTRALALAPAPEPVRRVAGLLPVLVLIQIWLGGLVAGSKAGLLYNTWPDMDGMLVPPARMLFDKVPFIENFVDNLALVQFNHRLFAYLVVLVALAHAVQAVRMAPGAAAGRAMGVAALTLAQMGLGIVTLLLQVPLWAGLAHQVFAMAVLIMATVHARLSVGVPAASAPTGAAVPIGLEALAGRGV.

The next 5 helical transmembrane spans lie at 25–45 (GAVRAWLYLLAVLVVAMVAVG), 112–132 (LLGRIVGLVFFLPFAWFWWRG), 138–158 (LLLGLLGLGLLGGLQGAIGWI), 176–196 (LALHLTTASLILAGLVWLAAG), and 212–232 (VAGLLPVLVLIQIWLGGLVAG). Histidine 277 provides a ligand contact to heme. A run of 3 helical transmembrane segments spans residues 279–299 (LFAYLVVLVALAHAVQAVRMA), 307–327 (AMGVAALTLAQMGLGIVTLLL), and 329–349 (VPLWAGLAHQVFAMAVLIMAT). Histidine 337 contacts heme.

The protein belongs to the COX15/CtaA family. Type 2 subfamily. Interacts with CtaB. Heme b serves as cofactor.

The protein resides in the cell membrane. The enzyme catalyses Fe(II)-heme o + 2 A + H2O = Fe(II)-heme a + 2 AH2. It functions in the pathway porphyrin-containing compound metabolism; heme A biosynthesis; heme A from heme O: step 1/1. Functionally, catalyzes the conversion of heme O to heme A by two successive hydroxylations of the methyl group at C8. The first hydroxylation forms heme I, the second hydroxylation results in an unstable dihydroxymethyl group, which spontaneously dehydrates, resulting in the formyl group of heme A. This chain is Heme A synthase, found in Methylorubrum populi (strain ATCC BAA-705 / NCIMB 13946 / BJ001) (Methylobacterium populi).